The sequence spans 331 residues: DNA-directed RNA polymerase subunit alpha (331 aa).

The interval 1–225 (MLDIAMPKLE…QYSSIIADFN (225 aa)) is alpha N-terminal domain (alpha-NTD). An alpha C-terminal domain (alpha-CTD) region spans residues 243–331 (PSEIYDMPIE…AARLNDGSAE (89 aa)).

Belongs to the RNA polymerase alpha chain family. Homodimer. The RNAP catalytic core consists of 2 alpha, 1 beta, 1 beta' and 1 omega subunit. When a sigma factor is associated with the core the holoenzyme is formed, which can initiate transcription.

It catalyses the reaction RNA(n) + a ribonucleoside 5'-triphosphate = RNA(n+1) + diphosphate. In terms of biological role, DNA-dependent RNA polymerase catalyzes the transcription of DNA into RNA using the four ribonucleoside triphosphates as substrates. The chain is DNA-directed RNA polymerase subunit alpha from Herpetosiphon aurantiacus (strain ATCC 23779 / DSM 785 / 114-95).